We begin with the raw amino-acid sequence, 630 residues long: Transposase B from transposon PsiTn554 (630 aa).

Residues 216-302 (TYFKQLVKRY…ILEGLFSTLH (87 aa)) enclose the Core-binding (CB) domain. A Tyr recombinase domain is found at 326–513 (AKPRFIDEFV…FDETLKNEFT (188 aa)). Residues Arg363, Lys391, His465, Arg468, and His491 contribute to the active site. Tyr500 (O-(3'-phospho-DNA)-tyrosine intermediate) is an active-site residue.

The protein belongs to the 'phage' integrase family.

The protein is Transposase B from transposon PsiTn554 (tnpB) of Staphylococcus aureus.